A 1347-amino-acid chain; its full sequence is Agglutinin-like protein 5 (1347 aa).

An N-terminal signal peptide occupies residues 1 to 19 (MIQQFTLLFLYLSFATAKA). Intrachain disulfides connect Cys73-Cys150, Cys96-Cys112, Cys205-Cys298, and Cys227-Cys256. ALS repeat units lie at residues 365 to 396 (TTIT…VDVP), 401 to 432 (TTVT…VQVP), 438 to 469 (TTTT…VREP), 474 to 505 (VTTT…VREP), 510 to 541 (VTTT…IKEP), and 546 to 577 (VTTT…IHDP). Disordered regions lie at residues 580 to 678 (ESSS…WDSS), 704 to 725 (VSNS…SNTS), and 789 to 813 (SDPT…FSDE). N-linked (GlcNAc...) asparagine glycans are attached at residues Asn593 and Asn723. Asn847 carries an N-linked (GlcNAc...) asparagine glycan. Disordered regions lie at residues 855–896 (ESES…STVT), 909–964 (TGMP…KSSV), 977–1021 (SETS…KESS), 1062–1111 (EDNE…VSSL), and 1139–1180 (ATSL…NRLS). 3 stretches are compositionally biased toward low complexity: residues 856 to 870 (SESS…ASES), 879 to 896 (SEST…STVT), and 921 to 939 (TSDV…PTSA). A compositionally biased stretch (polar residues) spans 940–950 (EQSITDNPNID). 2 stretches are compositionally biased toward low complexity: residues 951–964 (SSQT…KSSV) and 977–1002 (SETS…NSDT). 2 stretches are compositionally biased toward polar residues: residues 1003–1021 (GNIN…KESS) and 1066–1088 (PNTF…SVLS). Low complexity-rich tracts occupy residues 1097-1111 (IKTS…VSSL) and 1140-1158 (TSLR…SSGT). Asn1229 and Asn1254 each carry an N-linked (GlcNAc...) asparagine glycan. A lipid anchor (GPI-anchor amidated serine) is attached at Ser1326. A propeptide spans 1327-1347 (SATKHPSWLLKFISVALFFFL) (removed in mature form).

This sequence belongs to the ALS family. Forms homodimers through the tandem repeats. Aggregates in amyloid-like structures, with self-propagating secondary-structure changes, amyloid-characteristic dye binding, and induced birefringence. Post-translationally, the GPI-anchor is attached to the protein in the endoplasmic reticulum and serves to target the protein to the cell surface. There, the glucosamine-inositol phospholipid moiety is cleaved off and the GPI-modified mannoprotein is covalently attached via its lipidless GPI glycan remnant to the 1,6-beta-glucan of the outer cell wall layer.

The protein localises to the cell membrane. It is found in the secreted. It localises to the cell wall. In terms of biological role, cell surface adhesion protein which mediates both yeast-to-host tissue adherence and yeast aggregation. Plays an important role in the pathogenesis of C.albicans infections. Forms amyloid structures, essential for cell-cell association and cell-substrate adhesion to polystyrene. This chain is Agglutinin-like protein 5 (ALS5), found in Candida albicans (strain SC5314 / ATCC MYA-2876) (Yeast).